Consider the following 113-residue polypeptide: DNA-binding protein PTO0204 (113 aa).

The protein belongs to the PDCD5 family.

The chain is DNA-binding protein PTO0204 from Picrophilus torridus (strain ATCC 700027 / DSM 9790 / JCM 10055 / NBRC 100828 / KAW 2/3).